The following is a 184-amino-acid chain: MISVTDLRPGTKVKMDGGLWECVEYQHQKLGRGGAKVVAKFKNLETGATVERTFNSGEKLEDIYVETRELQYLYPEGEEMVFMDLETYEQFAVPRSRVVGAEFFKEGMTALGDMYEGQPIKVTPPTVVELKVVDTPPGVRGDTVSGGSKPATLETGAVVQVPLFVEPGEVIKVDTRTGEYVGRA.

It belongs to the elongation factor P family.

The protein localises to the cytoplasm. It functions in the pathway protein biosynthesis; polypeptide chain elongation. Functionally, involved in peptide bond synthesis. Stimulates efficient translation and peptide-bond synthesis on native or reconstituted 70S ribosomes in vitro. Probably functions indirectly by altering the affinity of the ribosome for aminoacyl-tRNA, thus increasing their reactivity as acceptors for peptidyl transferase. The protein is Elongation factor P of Thermus thermophilus (strain ATCC BAA-163 / DSM 7039 / HB27).